The following is a 556-amino-acid chain: 2-succinyl-5-enolpyruvyl-6-hydroxy-3-cyclohexene-1-carboxylate synthase (556 aa).

Belongs to the TPP enzyme family. MenD subfamily. In terms of assembly, homodimer. Mg(2+) serves as cofactor. It depends on Mn(2+) as a cofactor. The cofactor is thiamine diphosphate.

The enzyme catalyses isochorismate + 2-oxoglutarate + H(+) = 5-enolpyruvoyl-6-hydroxy-2-succinyl-cyclohex-3-ene-1-carboxylate + CO2. It participates in quinol/quinone metabolism; 1,4-dihydroxy-2-naphthoate biosynthesis; 1,4-dihydroxy-2-naphthoate from chorismate: step 2/7. The protein operates within quinol/quinone metabolism; menaquinone biosynthesis. Functionally, catalyzes the thiamine diphosphate-dependent decarboxylation of 2-oxoglutarate and the subsequent addition of the resulting succinic semialdehyde-thiamine pyrophosphate anion to isochorismate to yield 2-succinyl-5-enolpyruvyl-6-hydroxy-3-cyclohexene-1-carboxylate (SEPHCHC). This chain is 2-succinyl-5-enolpyruvyl-6-hydroxy-3-cyclohexene-1-carboxylate synthase, found in Staphylococcus epidermidis (strain ATCC 35984 / DSM 28319 / BCRC 17069 / CCUG 31568 / BM 3577 / RP62A).